Reading from the N-terminus, the 275-residue chain is Tumor necrosis factor-inducible gene 6 protein (275 aa).

An N-terminal signal peptide occupies residues methionine 1–glycine 17. The Link domain maps to glycine 36 to asparagine 129. 3 cysteine pairs are disulfide-bonded: cysteine 58–cysteine 127, cysteine 82–cysteine 103, and cysteine 135–cysteine 161. A glycan (N-linked (GlcNAc...) asparagine) is linked at asparagine 118. Positions cysteine 135–valine 247 constitute a CUB domain. 5 residues coordinate Ca(2+): glutamate 183, aspartate 191, aspartate 232, serine 234, and valine 235. Cysteine 188 and cysteine 210 are oxidised to a cystine. Over residues serine 253–asparagine 264 the composition is skewed to polar residues. The interval serine 253–leucine 275 is disordered. A glycan (N-linked (GlcNAc...) asparagine) is linked at asparagine 258.

Interacts (via Link domain) with inter-alpha-inhibitor (I-alpha-I) component bikunin. Interacts with ITIH2/HC2; this interaction is required for transesterification of the HC to hyaluronan. Interacts (via Link and CUB domains) with ITIH1. Chondroitin sulfate may be required for the stability of the complex. Interacts (via Link domain) with various C-X-C and C-C chemokines including PF4, CXCL8, CXCL11, CXCL12, CCL2, CCL7, CCL19, CCL21, and CCL27; this interaction interferes with chemokine binding to glycosaminoglycans. Interacts (primarily via Link domain) with BMP2; this interaction is inhibited by hyaluronan. Interacts (via both Link and CUB domains) with TNFSF11. Interacts (via CUB domain) with FN1 (via type III repeats 9-14); this interaction enhances fibronectin fibril assembly. TNFAIP6 may act as a bridging molecule between FN1 and THBS1. Expressed in epiphyseal and metaphyseal bone marrow of both the femur and tibia (at protein level).

The protein localises to the secreted. Major regulator of extracellular matrix organization during tissue remodeling. Catalyzes the transfer of a heavy chain (HC) from inter-alpha-inhibitor (I-alpha-I) complex to hyaluronan. Cleaves the ester bond between the C-terminus of the HC and GalNAc residue of the chondroitin sulfate chain in I-alpha-I complex followed by transesterification of the HC to hyaluronan. In the process, potentiates the antiprotease function of I-alpha-I complex through release of free bikunin. Acts as a catalyst in the formation of hyaluronan-HC oligomers and hyaluronan-rich matrix surrounding the cumulus cell-oocyte complex, a necessary step for oocyte fertilization. Assembles hyaluronan in pericellular matrices that serve as platforms for receptor clustering and signaling. Enables binding of hyaluronan deposited on the surface of macrophages to LYVE1 on lymphatic endothelium and facilitates macrophage extravasation. Alters hyaluronan binding to functionally latent CD44 on vascular endothelium, switching CD44 into an active state that supports leukocyte rolling. Modulates the interaction of chemokines with extracellular matrix components and proteoglycans on endothelial cell surface, likely preventing chemokine gradient formation. In a negative feedback mechanism, may limit excessive neutrophil recruitment at inflammatory sites by antagonizing the association of CXCL8 with glycosaminoglycans on vascular endothelium. Has a role in osteogenesis and bone remodeling. Inhibits BMP2-dependent differentiation of mesenchymal stem cell to osteoblasts. Protects against bone erosion during inflammation by inhibiting TNFSF11/RANKL-dependent osteoclast activation. The protein is Tumor necrosis factor-inducible gene 6 protein (Tnfaip6) of Mus musculus (Mouse).